The primary structure comprises 82 residues: Antimicrobial peptide Smp43 (82 aa).

A signal peptide spans 1–22 (MNRKLLLVTLMVTMLVMQPAEA). Residues 66 to 82 (EAGQMPFDEFMDILYES) constitute a propeptide that is removed on maturation.

This sequence belongs to the non-disulfide-bridged peptide (NDBP) superfamily. Long chain multifunctional peptide (group 2) family. In terms of tissue distribution, expressed by the venom gland.

Its subcellular location is the secreted. The protein localises to the target cell membrane. In terms of biological role, antimicrobial peptide with moderate activity against Gram-positive bacteria and Gram-negative bacteria, as well as low activity against fungi. Acts by inducing bacterial membrane disruption. Shows activity against B.subtilis (MIC=4 ug/ml), S.epidermidis (MIC=64 ug/ml), S.aureus (MIC=32 ug/ml), E.coli (MIC=128 ug/ml), K.pneumoniae (MIC=64 ug/ml), P.aeruginosa (MIC=64 ug/ml), and C.albicans (MIC=128 ug/ml). Does not show hemolysis activity. The chain is Antimicrobial peptide Smp43 from Scorpio palmatus (Israeli golden scorpion).